The primary structure comprises 438 residues: Delta(14)-sterol reductase ERG24 (438 aa).

Over 1-13 the chain is Lumenal; sequence MVSALNPRTTEFE. Residues 14 to 34 form a helical membrane-spanning segment; it reads FGGLIGALGISIGLPVFTIIL. Topologically, residues 35-71 are cytoplasmic; it reads NQMIRPDYFIKGFFQNFDIVELWNGIKPLRYYLGNRE. Residues 72 to 90 form a helical membrane-spanning segment; the sequence is LWTVYCLWYGILAVLDVIL. Residues 91–109 are Lumenal-facing; sequence PGRVMKGVQLRDGSKLSYK. A helical membrane pass occupies residues 110–127; sequence INGIAMSTTLVLVLAIRW. The Cytoplasmic segment spans residues 128–147; the sequence is KLTDGQLPELQYLYENHVSL. The chain crosses the membrane as a helical span at residues 148-172; it reads CIISILFSFFLATYCYVASFIPLIF. At 173–242 the chain is on the lumenal side; that stretch reads KKNGNGKREK…LHHHYLKTGK (70 aa). Residues 243 to 263 form a helical membrane-spanning segment; that stretch reads INDALVLVNFLQGFYIFDGVL. Topologically, residues 264 to 308 are cytoplasmic; it reads NEEGVLTMMDITTDGFGFMLAFGDLSLVPFTYSLQARYLSVSPVE. Residues 309–328 form a helical membrane-spanning segment; the sequence is LGWVKVVGILAIMFLGFHIF. The Lumenal portion of the chain corresponds to 329 to 368; it reads HSANKQKSEFRQGKLENLKSIQTKRGTKLLCDGWWAKSQH. Residues lysine 335, arginine 339, leucine 358, tryptophan 363, 370–371, aspartate 410, 414–418, and tyrosine 425 each bind NADP(+); these read NY and CRLKY. Residues 369–387 form a helical membrane-spanning segment; sequence INYFGDWLISLSWCLATWF. Over 388–438 the chain is Cytoplasmic; that stretch reads QTPLTYYYSLYFATLLLHRQQRDEHKCRLKYGENWEEYERKVPYKIIPYVY.

This sequence belongs to the ERG4/ERG24 family.

The protein localises to the membrane. The enzyme catalyses 4,4-dimethyl-5alpha-cholesta-8,24-dien-3beta-ol + NADP(+) = 4,4-dimethyl-5alpha-cholesta-8,14,24-trien-3beta-ol + NADPH + H(+). The protein operates within steroid biosynthesis; zymosterol biosynthesis; zymosterol from lanosterol: step 2/6. With respect to regulation, inhibited by the morpholine antifungal drug fenpropimorph. Delta(14)-sterol reductase; part of the third module of ergosterol biosynthesis pathway that includes the late steps of the pathway. ERG24 reduces the C14=C15 double bond of 4,4-dimethyl-cholesta-8,14,24-trienol to produce 4,4-dimethyl-cholesta-8,24-dienol. The third module or late pathway involves the ergosterol synthesis itself through consecutive reactions that mainly occur in the endoplasmic reticulum (ER) membrane. Firstly, the squalene synthase ERG9 catalyzes the condensation of 2 farnesyl pyrophosphate moieties to form squalene, which is the precursor of all steroids. Squalene synthase is crucial for balancing the incorporation of farnesyl diphosphate (FPP) into sterol and nonsterol isoprene synthesis. Secondly, the squalene epoxidase ERG1 catalyzes the stereospecific oxidation of squalene to (S)-2,3-epoxysqualene, which is considered to be a rate-limiting enzyme in steroid biosynthesis. Then, the lanosterol synthase ERG7 catalyzes the cyclization of (S)-2,3 oxidosqualene to lanosterol, a reaction that forms the sterol core. In the next steps, lanosterol is transformed to zymosterol through a complex process involving various demethylation, reduction and desaturation reactions. The lanosterol 14-alpha-demethylase ERG11 (also known as CYP51) catalyzes C14-demethylation of lanosterol to produce 4,4'-dimethyl cholesta-8,14,24-triene-3-beta-ol, which is critical for ergosterol biosynthesis. The C-14 reductase ERG24 reduces the C14=C15 double bond of 4,4-dimethyl-cholesta-8,14,24-trienol to produce 4,4-dimethyl-cholesta-8,24-dienol. 4,4-dimethyl-cholesta-8,24-dienol is substrate of the C-4 demethylation complex ERG25-ERG26-ERG27 in which ERG25 catalyzes the three-step monooxygenation required for the demethylation of 4,4-dimethyl and 4alpha-methylsterols, ERG26 catalyzes the oxidative decarboxylation that results in a reduction of the 3-beta-hydroxy group at the C-3 carbon to an oxo group, and ERG27 is responsible for the reduction of the keto group on the C-3. ERG28 has a role as a scaffold to help anchor ERG25, ERG26 and ERG27 to the endoplasmic reticulum and ERG29 regulates the activity of the iron-containing C4-methylsterol oxidase ERG25. Then, the sterol 24-C-methyltransferase ERG6 catalyzes the methyl transfer from S-adenosyl-methionine to the C-24 of zymosterol to form fecosterol. The C-8 sterol isomerase ERG2 catalyzes the reaction which results in unsaturation at C-7 in the B ring of sterols and thus converts fecosterol to episterol. The sterol-C5-desaturase ERG3 then catalyzes the introduction of a C-5 double bond in the B ring to produce 5-dehydroepisterol. The C-22 sterol desaturase ERG5 further converts 5-dehydroepisterol into ergosta-5,7,22,24(28)-tetraen-3beta-ol by forming the C-22(23) double bond in the sterol side chain. Finally, ergosta-5,7,22,24(28)-tetraen-3beta-ol is substrate of the C-24(28) sterol reductase ERG4 to produce ergosterol. This Saccharomyces cerevisiae (strain ATCC 204508 / S288c) (Baker's yeast) protein is Delta(14)-sterol reductase ERG24.